The sequence spans 139 residues: Large ribosomal subunit protein uL16 (139 aa).

Basic residues predominate over residues 1–19 (MLIPRRVKYRKQHHPKRTG). The tract at residues 1 to 23 (MLIPRRVKYRKQHHPKRTGAAKG) is disordered.

The protein belongs to the universal ribosomal protein uL16 family. As to quaternary structure, part of the 50S ribosomal subunit.

Binds 23S rRNA and is also seen to make contacts with the A and possibly P site tRNAs. The protein is Large ribosomal subunit protein uL16 of Cutibacterium acnes (strain DSM 16379 / KPA171202) (Propionibacterium acnes).